The chain runs to 173 residues: Secreted RxLR effector protein RXLR-C12 (173 aa).

Positions 1 to 18 are cleaved as a signal peptide; the sequence is MLQFATAFLAISANVVMT. The RxLR-dEER signature appears at 41–55; sequence RRLRTHEIGTVPEER. Residue Asn-155 is glycosylated (N-linked (GlcNAc...) asparagine).

This sequence belongs to the RxLR effector family.

It is found in the secreted. The protein localises to the host cytoplasm. The protein resides in the host nucleus. Functionally, secreted effector that suppresses pattern-triggered immunity (PTI) in plant host. The sequence is that of Secreted RxLR effector protein RXLR-C12 from Plasmopara halstedii (Downy mildew of sunflower).